The following is a 339-amino-acid chain: Probable cytosolic iron-sulfur protein assembly protein CIAO1 (339 aa).

WD repeat units follow at residues 14–53 (HPDSRCWFLAWNPTGTLLASCGGDRKIRIWGTEGDSWICK), 59–98 (GHQRTVRKVAWSPCGNYLASASFDATTCIWKKNQDDFECV), 103–142 (GHENEVKSVAWAPSGNLLATCSRDKSVWVWEVDEEDEYEC), 148–187 (SHTQDVKHVVWHPSQELLASASYDDTVKLYQEEGDDWVCC), 192–231 (GHESTVWSIAFDPSGQRLASCSDDRTVRIWRQYLPGNEQG), 250–289 (FHTRTIYDVAWCQLTGALATACGDDAIRVFEEDPGSDPQQ), and 301–339 (AHSQDVNCVAWNPKEAGLLASCSDDGEVAFWEYHQPAGL). Positions 176–178 (LYQ) match the LYR motif; required for interaction with HSC20 motif.

Belongs to the WD repeat CIA1 family. As to quaternary structure, component of the CIA complex. Interacts with CIAO2A and forms a complex with CIAO2B and MMS19; the interactions with CIAO2A and CIAO2B are mutually exclusive. Interacts with CHD1L, ERCC2, IREB2 and POLD1. Component of the MMXD complex, which includes CIAO1, ERCC2, CIAO2B, MMS19 and SLC25A5. Interacts with WT1. Interacts with CIAO3. Interacts (via LYR motif) with HSC20.

The protein resides in the cytoplasm. Key component of the cytosolic iron-sulfur protein assembly (CIA) complex, a multiprotein complex that mediates the incorporation of iron-sulfur cluster into extramitochondrial Fe/S proteins. As a CIA complex component, interacts specifically with CIAO2A or CIAO2B and MMS19 to assist different branches of iron-sulfur protein assembly, depending of its interactors. The complex CIAO1:CIAO2B:MMS19 binds to and facilitates the assembly of most cytosolic-nuclear Fe/S proteins. CIAO1:CIAO2A specifically matures ACO1 and stabilizes IREB2. Seems to specifically modulate the transactivation activity of WT1. As part of the mitotic spindle-associated MMXD complex it may play a role in chromosome segregation. This Rattus norvegicus (Rat) protein is Probable cytosolic iron-sulfur protein assembly protein CIAO1.